Reading from the N-terminus, the 407-residue chain is MKRAFIMVLDSFGIGATEDADRFGDVGSDTMGHIAEACAKGEADIGRQGPLNLPNLTRLGLVKAHEGSTGKVAAGMDANAEVVGAYAWAHELSSGKDTPSGHWEIAGVPVLFDWGYFSDHENSFPQKLLDKLVERGNLPGYLGNCHSSGTVILDQLGEEHMKTGKPIFYTSADSVFQIACHEETFGLDRLYELCEIAREELTEGGYNIGRVIARPFIGNKPGEFQRTGNRHDLAVEPPAATVLQKLVDEKDGQVVSVGKIADIYANCGITKKVKATGLDALFDATVKEMKEAGDKTIVFTNFVDFDSSWGHRRDIAGYAAGLELFDRRLPELMELVGEDDILILTADHGCDPSWTGTDHTREHIPVLVYGPKVKPGSLGHRETFADIGQTIASYFGTSPMDYGKNML.

Residues Asp10, Asp306, His311, Asp347, His348, and His359 each contribute to the Mn(2+) site.

This sequence belongs to the phosphopentomutase family. Mn(2+) serves as cofactor.

Its subcellular location is the cytoplasm. It carries out the reaction 2-deoxy-alpha-D-ribose 1-phosphate = 2-deoxy-D-ribose 5-phosphate. It catalyses the reaction alpha-D-ribose 1-phosphate = D-ribose 5-phosphate. Its pathway is carbohydrate degradation; 2-deoxy-D-ribose 1-phosphate degradation; D-glyceraldehyde 3-phosphate and acetaldehyde from 2-deoxy-alpha-D-ribose 1-phosphate: step 1/2. Its function is as follows. Isomerase that catalyzes the conversion of deoxy-ribose 1-phosphate (dRib-1-P) and ribose 1-phosphate (Rib-1-P) to deoxy-ribose 5-phosphate (dRib-5-P) and ribose 5-phosphate (Rib-5-P), respectively. The chain is Phosphopentomutase from Enterobacter sp. (strain 638).